Consider the following 146-residue polypeptide: Large ribosomal subunit protein bL19 (146 aa).

The protein belongs to the bacterial ribosomal protein bL19 family.

In terms of biological role, this protein is located at the 30S-50S ribosomal subunit interface and may play a role in the structure and function of the aminoacyl-tRNA binding site. The polypeptide is Large ribosomal subunit protein bL19 (Bartonella quintana (strain Toulouse) (Rochalimaea quintana)).